The chain runs to 314 residues: Acetaldehyde dehydrogenase 2 (314 aa).

11 to 14 (SGNI) is an NAD(+) binding site. Residue cysteine 129 is the Acyl-thioester intermediate of the active site. NAD(+) is bound by residues 160 to 168 (SAGPGTRAN) and asparagine 291.

Belongs to the acetaldehyde dehydrogenase family.

The catalysed reaction is acetaldehyde + NAD(+) + CoA = acetyl-CoA + NADH + H(+). The sequence is that of Acetaldehyde dehydrogenase 2 from Rhodococcus erythropolis (strain PR4 / NBRC 100887).